A 548-amino-acid polypeptide reads, in one-letter code: Chaperonin GroEL (548 aa).

ATP-binding positions include 30–33 (TLGP), lysine 51, 87–91 (DGTTT), glycine 415, and aspartate 496.

This sequence belongs to the chaperonin (HSP60) family. In terms of assembly, forms a cylinder of 14 subunits composed of two heptameric rings stacked back-to-back. Interacts with the co-chaperonin GroES.

Its subcellular location is the cytoplasm. The enzyme catalyses ATP + H2O + a folded polypeptide = ADP + phosphate + an unfolded polypeptide.. Together with its co-chaperonin GroES, plays an essential role in assisting protein folding. The GroEL-GroES system forms a nano-cage that allows encapsulation of the non-native substrate proteins and provides a physical environment optimized to promote and accelerate protein folding. The chain is Chaperonin GroEL from Haemophilus influenzae (strain PittGG).